Consider the following 263-residue polypeptide: Acyl-[acyl-carrier-protein]--UDP-N-acetylglucosamine O-acyltransferase (263 aa).

This sequence belongs to the transferase hexapeptide repeat family. LpxA subfamily. As to quaternary structure, homotrimer.

The protein resides in the cytoplasm. It carries out the reaction a (3R)-hydroxyacyl-[ACP] + UDP-N-acetyl-alpha-D-glucosamine = a UDP-3-O-[(3R)-3-hydroxyacyl]-N-acetyl-alpha-D-glucosamine + holo-[ACP]. Its pathway is glycolipid biosynthesis; lipid IV(A) biosynthesis; lipid IV(A) from (3R)-3-hydroxytetradecanoyl-[acyl-carrier-protein] and UDP-N-acetyl-alpha-D-glucosamine: step 1/6. Its function is as follows. Involved in the biosynthesis of lipid A, a phosphorylated glycolipid that anchors the lipopolysaccharide to the outer membrane of the cell. The polypeptide is Acyl-[acyl-carrier-protein]--UDP-N-acetylglucosamine O-acyltransferase (Campylobacter lari (strain RM2100 / D67 / ATCC BAA-1060)).